We begin with the raw amino-acid sequence, 218 residues long: rRNA methyltransferase 2, mitochondrial (218 aa).

S-adenosyl-L-methionine is bound by residues 59–62 (PGSW), Asp-80, 96–97 (DI), and Asp-133. The active-site Proton acceptor is Lys-173.

This sequence belongs to the class I-like SAM-binding methyltransferase superfamily. RNA methyltransferase RlmE family.

The protein resides in the mitochondrion. It carries out the reaction a uridine in 21S rRNA + S-adenosyl-L-methionine = a 2'-O-methyluridine in 21S rRNA + S-adenosyl-L-homocysteine + H(+). Functionally, S-adenosyl-L-methionine-dependent 2'-O-ribose methyltransferase that catalyzes the formation of the 2'-O-methyluridine corresponding to position 2791 in S.cerevisiae 21S mitochondrial large subunit ribosomal RNA (mtLSU rRNA), a universally conserved modification in the peptidyl transferase domain of the mtLSU rRNA. This chain is rRNA methyltransferase 2, mitochondrial, found in Schizosaccharomyces pombe (strain 972 / ATCC 24843) (Fission yeast).